We begin with the raw amino-acid sequence, 146 residues long: Hemoglobin subunit beta-1 (146 aa).

The region spanning 2–146 (GLTAHDRQLI…IADALGKGYH (145 aa)) is the Globin domain. H63 and H92 together coordinate heme b.

Belongs to the globin family. As to quaternary structure, heterotetramer of two alpha chains and two beta chains. Red blood cells.

In terms of biological role, involved in oxygen transport from the lung to the various peripheral tissues. The chain is Hemoglobin subunit beta-1 (hbb1) from Xenopus laevis (African clawed frog).